Reading from the N-terminus, the 142-residue chain is Galactose-6-phosphate isomerase subunit LacA (142 aa).

This sequence belongs to the LacAB/RpiB family. As to quaternary structure, heteromultimeric protein consisting of LacA and LacB.

It catalyses the reaction aldehydo-D-galactose 6-phosphate = keto-D-tagatose 6-phosphate. The protein operates within carbohydrate metabolism; D-galactose 6-phosphate degradation; D-tagatose 6-phosphate from D-galactose 6-phosphate: step 1/1. The protein is Galactose-6-phosphate isomerase subunit LacA of Enterococcus faecalis (strain ATCC 700802 / V583).